The following is a 363-amino-acid chain: tRNA(Met) cytidine acetate ligase (363 aa).

Residues isoleucine 7 to leucine 20, glycine 96, asparagine 152, and arginine 175 contribute to the ATP site.

Belongs to the TmcAL family.

It localises to the cytoplasm. It carries out the reaction cytidine(34) in elongator tRNA(Met) + acetate + ATP = N(4)-acetylcytidine(34) in elongator tRNA(Met) + AMP + diphosphate. In terms of biological role, catalyzes the formation of N(4)-acetylcytidine (ac(4)C) at the wobble position of elongator tRNA(Met), using acetate and ATP as substrates. First activates an acetate ion to form acetyladenylate (Ac-AMP) and then transfers the acetyl group to tRNA to form ac(4)C34. This Streptococcus suis (strain 98HAH33) protein is tRNA(Met) cytidine acetate ligase.